Reading from the N-terminus, the 74-residue chain is Protein SlyX homolog (74 aa).

It belongs to the SlyX family.

The polypeptide is Protein SlyX homolog (Neisseria meningitidis serogroup C (strain 053442)).